The primary structure comprises 611 residues: Brain-enriched guanylate kinase-associated protein (611 aa).

At Tyr156 the chain carries Phosphotyrosine. Phosphoserine occurs at positions 219, 248, and 265. Thr268 carries the post-translational modification Phosphothreonine. Phosphoserine is present on residues Ser284, Ser364, and Ser391. At Arg399 the chain carries Asymmetric dimethylarginine. Ser474, Ser484, Ser494, Ser496, Ser519, Ser521, and Ser525 each carry phosphoserine. Positions 520–611 (LSPSRSADPL…KAQLYGTLLN (92 aa)) are disordered. Residues 554–563 (EPEHGSRDSL) show a composition bias toward basic and acidic residues. Ser571 and Ser581 each carry phosphoserine.

As to quaternary structure, interacts with DLG4 and DLGAP1 and forms a ternary complex. Brain-specific. Expressed in neurons and rather enriched at synaptic junctions.

The protein resides in the cytoplasm. It is found in the membrane. In terms of biological role, may sustain the structure of the postsynaptic density (PSD). This chain is Brain-enriched guanylate kinase-associated protein (Begain), found in Rattus norvegicus (Rat).